A 238-amino-acid polypeptide reads, in one-letter code: Zinc finger protein ZAT6 (238 aa).

The span at M1 to M15 shows a compositional bias: polar residues. The interval M1–D42 is disordered. The Nuclear localization signal motif lies at K30–R38. 2 C2H2-type zinc fingers span residues Y89–H111 and H148–H170. The disordered stretch occupies residues N175 to F202. The span at S180 to S193 shows a compositional bias: low complexity.

The protein resides in the nucleus. Its function is as follows. Probable transcription factor that regulates root development and phosphate (Pi) acquisition and homeostasis. Probably acts as a repressor of primary root growth and regulates Pi homeostasis through the control of root architecture. In Arabidopsis thaliana (Mouse-ear cress), this protein is Zinc finger protein ZAT6 (ZAT6).